The chain runs to 1806 residues: Non-reducing polyketide synthase pks12 (1806 aa).

The Starter acyltransferase (SAT) domain occupies 30 to 191 (TDTMSGMISL…TKLHLRGKVH (162 aa)). A Ketosynthase family 3 (KS3) domain is found at 330–755 (ENAIAIVGAG…GSNSALICGE (426 aa)). Catalysis depends on for beta-ketoacyl synthase activity residues C504, H639, and H678. Positions 860-1156 (LAFSGQSKQT…HNPSQHTFLG (297 aa)) are malonyl-CoA:ACP transacylase (MAT) domain. In terms of domain architecture, Malonyl-CoA:ACP transacylase (MAT) spans 862-1147 (FSGQSKQTIG…IIPMVKRATH (286 aa)). S947 (for acyl/malonyl transferase activity) is an active-site residue. An N-terminal hotdog fold region spans residues 1249-1383 (PQTPPLKLVT…GRFSVTSHID (135 aa)). In terms of domain architecture, PKS/mFAS DH spans 1249 to 1558 (PQTPPLKLVT…FSRFPIAKLE (310 aa)). The segment at 1249-1558 (PQTPPLKLVT…FSRFPIAKLE (310 aa)) is product template (PT) domain. The active-site Proton acceptor; for dehydratase activity is the H1288. Residues 1404-1558 (SERLMAGRAY…FSRFPIAKLE (155 aa)) form a C-terminal hotdog fold region. The active-site Proton donor; for dehydratase activity is the D1468. Positions 1727–1804 (QSKLRIRQRI…ELVDYVVISS (78 aa)) constitute a Carrier domain. S1764 is subject to O-(pantetheine 4'-phosphoryl)serine.

Requires pantetheine 4'-phosphate as cofactor.

It functions in the pathway secondary metabolite biosynthesis. Functionally, non-reducing polyketide synthase; part of the gene cluster that mediates the biosynthesis of mitorubrinol and mitorubrinic acid, two virulence factors that improve T.marneffei intracellular survival in macrophages. The two polyketide synthases pks12 and pks11 are probably responsible for sequential use in the biosynthesis of mitorubrinol and mitorubrinic acid. The first part of the biosynthesis is probably catalyzed by pks12, which synthesized orsellinic acid. This tetraketide is then used as a starter unit for pks11, which possesses a SAT domain, in the second part of the biosynthesis. Pks11, contains a methyltransferase domain, also served that methylates the products, using a methyl group from S-adenosylmethionine. The chain is Non-reducing polyketide synthase pks12 from Talaromyces marneffei (Penicillium marneffei).